Consider the following 879-residue polypeptide: MEMNMDMDMDMELASIVSSLSALSHSNNNGGQAAAAGIVNGGAAGSQQIGGFRRSSFTTANEVDSEILLLHGSSESSPIFKKTALSVGTAPPFSTNSKKFFGNGGNYYQYRSTDTASLSSASYNNYHTHHTAANLGKNNKVNHLLGQYSASIAGPVYYNGNDNNNSGGEGFFEKFGKSLIDGTRELESQDRPDAVNTQSQFISKSVSNASLDTQNTFEQNVESDKNFNKLNRNTTNSGSLYHSSSNSGSSASLESENAHYPKRNIWNVANTPVFRPSNNPAAVGATNVALPNQQDGPANNNFPPYMNGFPPNQFHQGPHYQNFPNYLIGSPSNFISQMISVQIPANEDTEDSNGKKKKKANRPSSVSSPSSPPNNSPFPFAYPNPMMFMPPPPLSAPQQQQQQQQQQQQEDQQQQQQQENPYIYYPTPNPIPVKMPKDEKTFKKRNNKNHPANNSNNANKQANPYLENSIPTKNTSKKNASSKSNESTANNHKSHSHSHPHSQSLQQQQQTYHRSPLLEQLRNSSSDKNSNSNMSLKDIFGHSLEFCKDQHGSRFIQRELATSPASEKEVIFNEIRDDAIELSNDVFGNYVIQKFFEFGSKIQKNTLVDQFKGNMKQLSLQMYACRVIQKALEYIDSNQRIELVLELSDSVLQMIKDQNGNHVIQKAIETIPIEKLPFILSSLTGHIYHLSTHSYGCRVIQRLLEFGSSEDQESILNELKDFIPYLIQDQYGNYVIQYVLQQDQFTNKEMVDIKQEIIETVANNVVEYSKHKFASNVVEKSILYGSKNQKDLIISKILPRDKNHALNLEDDSPMILMIKDQFANYVIQKLVNVSEGEGKKLIVIAIRAYLDKLNKSNSLGNRHLASVEKLAALVENAEV.

The residue at position 83 (T83) is a Phosphothreonine. A phosphoserine mark is found at S207 and S210. Disordered regions lie at residues 222-256, 344-417, and 443-512; these read ESDKNFNKLNRNTTNSGSLYHSSSNSGSSASLESE, PANE…QQQQ, and KKRN…QQTY. Residues 237 to 255 show a composition bias toward low complexity; that stretch reads SGSLYHSSSNSGSSASLES. Pro residues predominate over residues 370–395; it reads SSPPNNSPFPFAYPNPMMFMPPPPLS. 4 stretches are compositionally biased toward low complexity: residues 398–417, 449–463, 472–491, and 501–512; these read QQQQQQQQQQQQEDQQQQQQ, NHPANNSNNANKQAN, TKNTSKKNASSKSNESTANN, and HSQSLQQQQQTY. In terms of domain architecture, PUM-HD spans 513–871; it reads HRSPLLEQLR…RHLASVEKLA (359 aa). 8 Pumilio repeats span residues 538–573, 574–609, 610–645, 646–681, 682–717, 718–759, 760–795, and 807–844; these read DIFGHSLEFCKDQHGSRFIQRELATSPASEKEVIFN, EIRDDAIELSNDVFGNYVIQKFFEFGSKIQKNTLVD, QFKGNMKQLSLQMYACRVIQKALEYIDSNQRIELVL, ELSDSVLQMIKDQNGNHVIQKAIETIPIEKLPFILS, SLTGHIYHLSTHSYGCRVIQRLLEFGSSEDQESILN, ELKD…EIIE, TVANNVVEYSKHKFASNVVEKSILYGSKNQKDLIIS, and NLEDDSPMILMIKDQFANYVIQKLVNVSEGEGKKLIVI.

The protein belongs to the PUF3 family.

The protein localises to the mitochondrion outer membrane. It localises to the cytoplasm. In terms of biological role, RNA-binding protein involved in post-transcriptional regulation. Negatively regulates expression of COX17 by binding to the 3'-UTR of COX17 mRNA. Promotes decay of COX17 mRNA by enhancing its rate of deadenylation and subsequent turnover. Predominantly binds to mRNAs encoding mitochondrial proteins and localizes them to the vicinity of mitochondria for translation. Regulates mitochondrial biogenesis, motility and morphology. This is mRNA-binding protein PUF3 (PUF3) from Saccharomyces cerevisiae (strain ATCC 204508 / S288c) (Baker's yeast).